The sequence spans 672 residues: Tubulin--tyrosine ligase-like protein 12 (672 aa).

One can recognise a TTL domain in the interval 332-670 (KIKIFLQIFA…LDEIDPTKVT (339 aa)). Residues 480-483 (CEYI), Lys-499, and Asp-501 contribute to the ATP site.

The protein belongs to the tubulin--tyrosine ligase family.

Functionally, regulates microtubule dynamics in uterine muscle cells. The chain is Tubulin--tyrosine ligase-like protein 12 from Caenorhabditis briggsae.